An 87-amino-acid chain; its full sequence is Putative regulatory protein GTNG_1019 (87 aa).

The protein belongs to the RemA family.

The chain is Putative regulatory protein GTNG_1019 from Geobacillus thermodenitrificans (strain NG80-2).